We begin with the raw amino-acid sequence, 233 residues long: Putative N-acetylmuramoyl-L-alanine amidase (233 aa).

The region spanning 1–219 (MIDPGHGGQD…IANAIYIALK (219 aa)) is the MurNAc-LAA domain.

Belongs to the N-acetylmuramoyl-L-alanine amidase 3 family.

The protein resides in the secreted. The catalysed reaction is Hydrolyzes the link between N-acetylmuramoyl residues and L-amino acid residues in certain cell-wall glycopeptides.. In terms of biological role, cell-wall hydrolase involved in septum cleavage during cell division. This Buchnera aphidicola subsp. Schizaphis graminum (strain Sg) protein is Putative N-acetylmuramoyl-L-alanine amidase (amiB).